We begin with the raw amino-acid sequence, 511 residues long: MEEIQRYLQLERSQQHDFLYPLIFQEYIYAFAHDRDFNRSILSENPGYDNKSSLLIVKRLITRMYQQNHFLISPNDSNQNTFLASKNDLRIQIISEGFAFIVEIPFSLRLISCLEGKKKKIVKSQNLRSIHSIFPFLEDHFSHLNFVLDILIPHPVHVEILVQTLRYWVKDASSLHLLRFFLNEYCNWNSLITPKKASSSFSKRNQRLFLFLYNSHVYEYESIFGFLRNQSSHLRSTSSGVLRERIHFYGKIERLVNVFVKVKDFQANLWLVKEPCMHYIRYQRKSILASKGTSLFMNKWKCYLVTFWQWHFSLWFHPRRIYINQLSNHSLEFLGYLSSVRMNPSVVRSQILENSFLINNAIKRVDTLVPIIPLIASLAKAKFCNVLGHPISKPVRADLSDSNIIDRFGRICRNLSHYHSGSSKKKSLYRIKYILRLSCARTLARKHKSTVRTFLKRLGSELLEEFLMSEEDVLFLTFPKVSSTLQGVYRSRIWYLDIISINDLANHKSKF.

This sequence belongs to the intron maturase 2 family. MatK subfamily.

The protein resides in the plastid. The protein localises to the chloroplast. In terms of biological role, usually encoded in the trnK tRNA gene intron. Probably assists in splicing its own and other chloroplast group II introns. This chain is Maturase K, found in Diplacus aurantiacus (Orange bush monkey flower).